The chain runs to 721 residues: Homeobox-leucine zipper protein HDG2 (721 aa).

The segment at 17–70 is disordered; that stretch reads NNHNYNHEDNNNEGFLRDDEFDSPNTKSGSENQEGGSGNDQDPLHPNKKKRYHR. Positions 21-34 are enriched in basic and acidic residues; that stretch reads YNHEDNNNEGFLRD. The homeobox DNA-binding region spans 64–123; it reads KKKRYHRHTQLQIQEMEAFFKECPHPDDKQRKQLSRELNLEPLQVKFWFQNKRTQMKNHH. Residues 120 to 194 are a coiled coil; that stretch reads KNHHERHENS…DRISAIAAKY (75 aa). The 227-residue stretch at 242–468 folds into the START domain; the sequence is TESDKPVIID…LDRQCERLAS (227 aa).

Belongs to the HD-ZIP homeobox family. Class IV subfamily. As to quaternary structure, interacts with AIL7/PLT7, ANT, BBM and AIL1. In terms of tissue distribution, expressed in hairless cell files of the hypocotyl epidermis. Expressed in shoot apical meristem (SAM) with higher levels in L1 cells and the epidermal layer of young leaves. Expressed in primary root tips, in the L1 of apical inflorescence meristems, early flower primordia, carpel epidermis, ovule primordia, nucellus, chalaze and seed coat.

The protein localises to the nucleus. Its function is as follows. Probable transcription factor. Involved, together with PDF2, in the regulation of flower organs development by promoting the expression of APETALA 3 (AP3) in the epidermis and internal cell layers of developing flowers. The chain is Homeobox-leucine zipper protein HDG2 from Arabidopsis thaliana (Mouse-ear cress).